We begin with the raw amino-acid sequence, 230 residues long: Ribonuclease 3 (230 aa).

The RNase III domain occupies Y5–D125. E40 contributes to the Mg(2+) binding site. D44 is a catalytic residue. Residues D111 and E114 each contribute to the Mg(2+) site. Residue E114 is part of the active site. Residues D153–Q223 form the DRBM domain.

It belongs to the ribonuclease III family. As to quaternary structure, homodimer. Mg(2+) serves as cofactor.

It localises to the cytoplasm. The catalysed reaction is Endonucleolytic cleavage to 5'-phosphomonoester.. Digests double-stranded RNA. Involved in the processing of primary rRNA transcript to yield the immediate precursors to the large and small rRNAs (23S and 16S). Processes some mRNAs, and tRNAs when they are encoded in the rRNA operon. Processes pre-crRNA and tracrRNA of type II CRISPR loci if present in the organism. This Francisella tularensis subsp. holarctica (strain LVS) protein is Ribonuclease 3.